An 890-amino-acid chain; its full sequence is Wolframin (890 aa).

Position 1 is an N-acetylmethionine (M1). The tract at residues 1–86 is disordered; that stretch reads MDSNTAPLGP…TGPTKGDMEI (86 aa). Residues 1–321 are interaction with ATP6V1A; the sequence is MDSNTAPLGP…MHWLSTIIPT (321 aa). Pro residues predominate over residues 10–20; sequence PSCPQPPPAPQ. At T30 the chain carries Phosphothreonine; by FAM20C. Phosphoserine; by FAM20C is present on S32. Phosphoserine is present on S157. Helical transmembrane passes span 314 to 334, 340 to 360, 402 to 422, 427 to 447, 465 to 485, 496 to 516, 529 to 549, 563 to 583, 589 to 609, and 632 to 652; these read WLST…FIVS, FFAF…MVIC, LEPY…FPIA, IPCS…YLSL, AGLL…KVLG, LVVL…YLFF, CYLV…VILL, YFLF…VGVL, FTSL…VPLL, and MVKL…FYVY. The Lumenal portion of the chain corresponds to 653–869; the sequence is RSEGMKVYNS…HVKIEHDWRS (217 aa). N-linked (GlcNAc...) asparagine glycosylation is found at N661 and N746. Residues 870–890 traverse the membrane as a helical segment; the sequence is TVHGAVKFAFDFFFFPFLSAA.

In terms of assembly, interacts with ATP6V1A. In terms of tissue distribution, highly expressed in heart followed by brain, placenta, lung and pancreas. Weakly expressed in liver, kidney and skeletal muscle. Also expressed in islet and beta-cell insulinoma cell line.

Its subcellular location is the endoplasmic reticulum membrane. It is found in the cytoplasmic vesicle. It localises to the secretory vesicle. Its function is as follows. Participates in the regulation of cellular Ca(2+) homeostasis, at least partly, by modulating the filling state of the endoplasmic reticulum Ca(2+) store. Negatively regulates the ER stress response and positively regulates the stability of V-ATPase subunits ATP6V1A and ATP1B1 by preventing their degradation through an unknown proteasome-independent mechanism. This Homo sapiens (Human) protein is Wolframin (WFS1).